Reading from the N-terminus, the 226-residue chain is Leucyl/phenylalanyl-tRNA--protein transferase (226 aa).

It belongs to the L/F-transferase family.

It localises to the cytoplasm. It carries out the reaction N-terminal L-lysyl-[protein] + L-leucyl-tRNA(Leu) = N-terminal L-leucyl-L-lysyl-[protein] + tRNA(Leu) + H(+). The enzyme catalyses N-terminal L-arginyl-[protein] + L-leucyl-tRNA(Leu) = N-terminal L-leucyl-L-arginyl-[protein] + tRNA(Leu) + H(+). It catalyses the reaction L-phenylalanyl-tRNA(Phe) + an N-terminal L-alpha-aminoacyl-[protein] = an N-terminal L-phenylalanyl-L-alpha-aminoacyl-[protein] + tRNA(Phe). Functionally, functions in the N-end rule pathway of protein degradation where it conjugates Leu, Phe and, less efficiently, Met from aminoacyl-tRNAs to the N-termini of proteins containing an N-terminal arginine or lysine. This chain is Leucyl/phenylalanyl-tRNA--protein transferase, found in Pseudomonas entomophila (strain L48).